A 263-amino-acid chain; its full sequence is Regulatory protein RecX (263 aa).

Belongs to the RecX family.

The protein resides in the cytoplasm. Modulates RecA activity. The sequence is that of Regulatory protein RecX from Bacillus pumilus (strain SAFR-032).